A 2005-amino-acid polypeptide reads, in one-letter code: Structural maintenance of chromosomes flexible hinge domain-containing protein 1 (2005 aa).

A compositionally biased stretch (gly residues) spans 1 to 13; sequence MAAADGGGPGGAS. Residues 1–23 form a disordered region; that stretch reads MAAADGGGPGGASVGTEEDGGGV. Alanine 2 carries the post-translational modification N-acetylalanine. Positions 111–702 are ATPase activity domain; that stretch reads TKERIDFLPH…LSVTWPEGDE (592 aa). Lysine 1349 carries the N6-acetyllysine modification. Residues lysine 1374 and lysine 1496 each participate in a glycyl lysine isopeptide (Lys-Gly) (interchain with G-Cter in SUMO2) cross-link. Phosphothreonine is present on threonine 1499. One can recognise an SMC hinge domain in the interval 1720–1847; that stretch reads GDVLGKIAHL…DNLDAANHYR (128 aa). Residue lysine 1802 is modified to N6-succinyllysine. Phosphoserine is present on serine 1974.

Belongs to the SMC family. Highly divergent. As to quaternary structure, homodimer; homodimerizes via its SMC hinge domain. Interacts with LRIF1. Sumoylated with SUMO1.

The protein resides in the chromosome. It catalyses the reaction ATP + H2O = ADP + phosphate + H(+). Non-canonical member of the structural maintenance of chromosomes (SMC) protein family that plays a key role in epigenetic silencing by regulating chromatin architecture. Promotes heterochromatin formation in both autosomes and chromosome X, probably by mediating the merge of chromatin compartments. Plays a key role in chromosome X inactivation in females by promoting the spreading of heterochromatin. Recruited to inactivated chromosome X by Xist RNA and acts by mediating the merge of chromatin compartments: promotes random chromatin interactions that span the boundaries of existing structures, leading to create a compartment-less architecture typical of inactivated chromosome X. Required to facilitate Xist RNA spreading. Also required for silencing of a subset of clustered autosomal loci in somatic cells, such as the DUX4 locus. Has ATPase activity; may participate in structural manipulation of chromatin in an ATP-dependent manner as part of its role in gene expression regulation. Also plays a role in DNA repair: localizes to sites of DNA double-strand breaks in response to DNA damage to promote the repair of DNA double-strand breaks. Acts by promoting non-homologous end joining (NHEJ) and inhibiting homologous recombination (HR) repair. In Homo sapiens (Human), this protein is Structural maintenance of chromosomes flexible hinge domain-containing protein 1.